The chain runs to 577 residues: MASLVLSLRIAPSTPPLGLGGGRFRGRRGAVACRAATFQQLDAVAVREEESKFKAGAAEGCNILPLKRCIFSDHLTPVLAYRCLVREDDREAPSFLFESVEQGSEGTNVGRYSVVGAQPAMEIVAKANHVTVMDHKMKSRREQFAPDPMKIPRSIMEQWNPQIVEGLPDAFCGGWVGFFSYDTVRYVETKKLPFSNAPEDDRNLPDIHLGLYNDIVVFDHVEKKTHVIHWVRVDCHESVDEAYEDGKNQLEALLSRLHSVNVPTLTAGSVKLNVGQFGSALQKSSMSREDYKKAVVQAKEHILAGDIFQVVLSQRFERRTFADPFEVYRALRIVNPSPYMAYLQARGCILVASSPEILTRVEKRTIVNRPLAGTIRRGKSKAEDKVLEQLLLSDEKQCAEHIMLVDLGRNDVGKVSKPGSVKVEKLMNVERYSHVMHISSTVTGELRDDLTCWDALRAALPVGTVSGAPKVRAMELIDQMEGKMRGPYSGGFGGVSFRGDMDIALALRTIVFPTGSRFDTMYSYTDKNARQEWVAHLQAGAGIVADSKPDDEHQECLNKAAGLARAIDLAESTFVDE.

A chloroplast-targeting transit peptide spans 1–34 (MASLVLSLRIAPSTPPLGLGGGRFRGRRGAVACR).

It belongs to the anthranilate synthase component I family. In terms of assembly, heterotetramer consisting of two non-identical subunits: a beta subunit and a large alpha subunit.

Its subcellular location is the plastid. The protein resides in the chloroplast. The catalysed reaction is chorismate + L-glutamine = anthranilate + pyruvate + L-glutamate + H(+). Its pathway is amino-acid biosynthesis; L-tryptophan biosynthesis; L-tryptophan from chorismate: step 1/5. With respect to regulation, feedback inhibition by tryptophan. Functionally, part of a heterotetrameric complex that catalyzes the two-step biosynthesis of anthranilate, an intermediate in the biosynthesis of L-tryptophan. In the first step, the glutamine-binding beta subunit of anthranilate synthase (AS) provides the glutamine amidotransferase activity which generates ammonia as a substrate that, along with chorismate, is used in the second step, catalyzed by the large alpha subunit of AS to produce anthranilate. The chain is Anthranilate synthase alpha subunit 1, chloroplastic (ASA1) from Oryza sativa subsp. indica (Rice).